A 197-amino-acid polypeptide reads, in one-letter code: dITP/XTP pyrophosphatase (197 aa).

A substrate-binding site is contributed by 8-13 (TGNQGK). Aspartate 69 (proton acceptor) is an active-site residue. Aspartate 69 is a Mg(2+) binding site. Substrate contacts are provided by residues serine 70, 154–157 (FGYD), lysine 177, and 182–183 (HR).

Belongs to the HAM1 NTPase family. Homodimer. Requires Mg(2+) as cofactor.

It carries out the reaction XTP + H2O = XMP + diphosphate + H(+). It catalyses the reaction dITP + H2O = dIMP + diphosphate + H(+). The catalysed reaction is ITP + H2O = IMP + diphosphate + H(+). In terms of biological role, pyrophosphatase that catalyzes the hydrolysis of nucleoside triphosphates to their monophosphate derivatives, with a high preference for the non-canonical purine nucleotides XTP (xanthosine triphosphate), dITP (deoxyinosine triphosphate) and ITP. Seems to function as a house-cleaning enzyme that removes non-canonical purine nucleotides from the nucleotide pool, thus preventing their incorporation into DNA/RNA and avoiding chromosomal lesions. The sequence is that of dITP/XTP pyrophosphatase from Photobacterium profundum (strain SS9).